The chain runs to 198 residues: Small ribosomal subunit protein eS1 (198 aa).

This sequence belongs to the eukaryotic ribosomal protein eS1 family.

The protein is Small ribosomal subunit protein eS1 of Methanosphaerula palustris (strain ATCC BAA-1556 / DSM 19958 / E1-9c).